The sequence spans 475 residues: Ribulose bisphosphate carboxylase large chain (475 aa).

Positions 1–2 are excised as a propeptide; it reads MV. Proline 3 carries the post-translational modification N-acetylproline. An N6,N6,N6-trimethyllysine modification is found at lysine 14. 2 residues coordinate substrate: asparagine 123 and threonine 173. The active-site Proton acceptor is lysine 175. Lysine 177 contacts substrate. Mg(2+)-binding residues include lysine 201, aspartate 203, and glutamate 204. Position 201 is an N6-carboxylysine (lysine 201). Residue histidine 294 is the Proton acceptor of the active site. The substrate site is built by arginine 295, histidine 327, and serine 379.

The protein belongs to the RuBisCO large chain family. Type I subfamily. As to quaternary structure, heterohexadecamer of 8 large chains and 8 small chains. It depends on Mg(2+) as a cofactor.

Its subcellular location is the plastid. It is found in the chloroplast. It catalyses the reaction 2 (2R)-3-phosphoglycerate + 2 H(+) = D-ribulose 1,5-bisphosphate + CO2 + H2O. It carries out the reaction D-ribulose 1,5-bisphosphate + O2 = 2-phosphoglycolate + (2R)-3-phosphoglycerate + 2 H(+). Functionally, ruBisCO catalyzes two reactions: the carboxylation of D-ribulose 1,5-bisphosphate, the primary event in carbon dioxide fixation, as well as the oxidative fragmentation of the pentose substrate in the photorespiration process. Both reactions occur simultaneously and in competition at the same active site. This Stigeoclonium helveticum (Green alga) protein is Ribulose bisphosphate carboxylase large chain.